We begin with the raw amino-acid sequence, 358 residues long: Methylthioribose-1-phosphate isomerase (358 aa).

Residues 54 to 56 (RGA), Arg-96, and Gln-205 each bind substrate. Asp-246 acts as the Proton donor in catalysis. 256 to 257 (NK) provides a ligand contact to substrate.

Belongs to the eIF-2B alpha/beta/delta subunits family. MtnA subfamily.

It catalyses the reaction 5-(methylsulfanyl)-alpha-D-ribose 1-phosphate = 5-(methylsulfanyl)-D-ribulose 1-phosphate. It functions in the pathway amino-acid biosynthesis; L-methionine biosynthesis via salvage pathway; L-methionine from S-methyl-5-thio-alpha-D-ribose 1-phosphate: step 1/6. Functionally, catalyzes the interconversion of methylthioribose-1-phosphate (MTR-1-P) into methylthioribulose-1-phosphate (MTRu-1-P). The protein is Methylthioribose-1-phosphate isomerase of Pseudomonas syringae pv. syringae (strain B728a).